The sequence spans 396 residues: Calcium-responsive transactivator (396 aa).

The segment at 1-148 (MSVAFASARP…TLPTTSMSIS (148 aa)) is N-terminal auto-inhibitory domain; necessary for interaction with SMARCA4/BRG1. The SH2-binding signature appears at 50-53 (YQQI). Disordered regions lie at residues 72–162 (QSLL…SQGV), 192–280 (QAAT…GDYA), and 311–396 (SQQQ…NYQQ). Over residues 90-106 (LTQSGSSQGLHSQGSLS) the composition is skewed to low complexity. 2 stretches are compositionally biased toward polar residues: residues 107-122 (DAIS…LQGQ) and 128-147 (SHVS…SMSI). A methionine-rich intra-molecular domain region spans residues 149–232 (GPGYSHAGPA…GSSMMGQRPM (84 aa)). 3 stretches are compositionally biased toward low complexity: residues 199-229 (SSAQ…MMGQ), 238-261 (SQQG…SHSQ), and 311-369 (SQQQ…YGSY). Residues 246 to 317 (YLGQEEYYGE…SQYSQQQAGY (72 aa)) form an MFD domain region. The tract at residues 334 to 396 (SQQSYPGQQQ…EQGQYGNYQQ (63 aa)) is necessary for nuclear localization. An SH2-binding motif is present at residues 353 to 356 (SQYP). Positions 371 to 379 (APQTAPSAQ) match the SH3-binding motif. The segment covering 384–396 (YGYEQGQYGNYQQ) has biased composition (low complexity). Positions 387–396 (EQGQYGNYQQ) are necessary for interaction with CREBBP and for the recruitment of CREBBP to the nuclear bodies. The SH2-binding signature appears at 391–394 (YGNY).

Belongs to the SS18 family. In terms of assembly, homodimer. Dimerization may be necessary for its function in neuronal dendritic development. Interacts (via C-terminus) with CREBBP (via N-terminus), EP300 and SMARCA4/BRG1. Interacts with the nBAF complex. Association with CREBBP facilitates transcription while the association with SMARCA4/BRG1 suppresses CREST-mediated transcription in resting neurons. In terms of tissue distribution, ubiquitous; with lowest levels in spleen.

The protein localises to the nucleus. The protein resides in the chromosome. Its subcellular location is the centromere. It localises to the kinetochore. Transcriptional activator which is required for calcium-dependent dendritic growth and branching in cortical neurons. Recruits CREB-binding protein (CREBBP) to nuclear bodies. Component of the CREST-BRG1 complex, a multiprotein complex that regulates promoter activation by orchestrating a calcium-dependent release of a repressor complex and a recruitment of an activator complex. In resting neurons, transcription of the c-FOS promoter is inhibited by BRG1-dependent recruitment of a phospho-RB1-HDAC1 repressor complex. Upon calcium influx, RB1 is dephosphorylated by calcineurin, which leads to release of the repressor complex. At the same time, there is increased recruitment of CREBBP to the promoter by a CREST-dependent mechanism, which leads to transcriptional activation. The CREST-BRG1 complex also binds to the NR2B promoter, and activity-dependent induction of NR2B expression involves a release of HDAC1 and recruitment of CREBBP. This Homo sapiens (Human) protein is Calcium-responsive transactivator (SS18L1).